Reading from the N-terminus, the 337-residue chain is Pentalenene synthase (337 aa).

Residues Asp-80 and Asp-84 each coordinate Mg(2+). Residues 80–84 (DDLFD) carry the DDXXD motif motif. Cys-128 and Cys-136 are joined by a disulfide. The Mg(2+) site is built by Asn-219, Ser-223, and Glu-227.

The protein belongs to the terpene synthase family. As to quaternary structure, monomer. Mg(2+) is required as a cofactor.

The enzyme catalyses (2E,6E)-farnesyl diphosphate = pentalenene + diphosphate. It functions in the pathway sesquiterpene biosynthesis; pentalenene biosynthesis; pentalenene from farnesyl diphosphate: step 1/1. Its pathway is antibiotic biosynthesis; pentalenolactone biosynthesis. Its function is as follows. Catalyzes the cyclization of farnesyl diphosphate (FPP) to the tricyclic sesquiterpene pentalenene, which is the hydrocarbon precursor of the pentalenolactone family of antibiotics produced by a variety of Streptomyces species. The protein is Pentalenene synthase (penA) of Streptomyces exfoliatus (Streptomyces hydrogenans).